Reading from the N-terminus, the 128-residue chain is Fluoride-specific ion channel FluC (128 aa).

Helical transmembrane passes span isoleucine 5–glycine 25, leucine 35–phenylalanine 55, leucine 67–valine 87, and phenylalanine 96–leucine 116. Na(+) is bound by residues glycine 75 and threonine 78.

It belongs to the fluoride channel Fluc/FEX (TC 1.A.43) family.

It localises to the cell inner membrane. The catalysed reaction is fluoride(in) = fluoride(out). With respect to regulation, na(+) is not transported, but it plays an essential structural role and its presence is essential for fluoride channel function. Functionally, fluoride-specific ion channel. Important for reducing fluoride concentration in the cell, thus reducing its toxicity. The protein is Fluoride-specific ion channel FluC of Burkholderia pseudomallei (strain 1106a).